The primary structure comprises 177 residues: Large ribosomal subunit protein uL10 (177 aa).

Belongs to the universal ribosomal protein uL10 family. As to quaternary structure, part of the ribosomal stalk of the 50S ribosomal subunit. The N-terminus interacts with L11 and the large rRNA to form the base of the stalk. The C-terminus forms an elongated spine to which L12 dimers bind in a sequential fashion forming a multimeric L10(L12)X complex.

Its function is as follows. Forms part of the ribosomal stalk, playing a central role in the interaction of the ribosome with GTP-bound translation factors. In Xanthomonas oryzae pv. oryzae (strain MAFF 311018), this protein is Large ribosomal subunit protein uL10.